The primary structure comprises 91 residues: C-C motif chemokine 5 (91 aa).

The signal sequence occupies residues 1–23; it reads MKVSAARLAVILVATALCAPASA. Intrachain disulfides connect Cys-33–Cys-57 and Cys-34–Cys-73.

The protein belongs to the intercrine beta (chemokine CC) family.

It localises to the secreted. Functionally, chemoattractant for blood monocytes, memory T-helper cells and eosinophils. Causes the release of histamine from basophils and activates eosinophils. May activate several chemokine receptors including CCR1, CCR3, CCR4 and CCR5. May also be an agonist of the G protein-coupled receptor GPR75. Together with GPR75, may play a role in neuron survival through activation of a downstream signaling pathway involving the PI3, Akt and MAP kinases. By activating GPR75 may also play a role in insulin secretion by islet cells. This chain is C-C motif chemokine 5 (CCL5), found in Macaca mulatta (Rhesus macaque).